Here is a 476-residue protein sequence, read N- to C-terminus: Aspartyl/glutamyl-tRNA(Asn/Gln) amidotransferase subunit B (476 aa).

It belongs to the GatB/GatE family. GatB subfamily. As to quaternary structure, heterotrimer of A, B and C subunits.

The catalysed reaction is L-glutamyl-tRNA(Gln) + L-glutamine + ATP + H2O = L-glutaminyl-tRNA(Gln) + L-glutamate + ADP + phosphate + H(+). It catalyses the reaction L-aspartyl-tRNA(Asn) + L-glutamine + ATP + H2O = L-asparaginyl-tRNA(Asn) + L-glutamate + ADP + phosphate + 2 H(+). Allows the formation of correctly charged Asn-tRNA(Asn) or Gln-tRNA(Gln) through the transamidation of misacylated Asp-tRNA(Asn) or Glu-tRNA(Gln) in organisms which lack either or both of asparaginyl-tRNA or glutaminyl-tRNA synthetases. The reaction takes place in the presence of glutamine and ATP through an activated phospho-Asp-tRNA(Asn) or phospho-Glu-tRNA(Gln). The sequence is that of Aspartyl/glutamyl-tRNA(Asn/Gln) amidotransferase subunit B from Neisseria meningitidis serogroup C (strain 053442).